A 293-amino-acid chain; its full sequence is Signal recognition particle receptor FtsY (293 aa).

GTP is bound by residues 93-100 (GVNGAGKT), 175-179 (DTAGR), and 239-242 (TKLD).

The protein belongs to the GTP-binding SRP family. FtsY subfamily. In terms of assembly, part of the signal recognition particle protein translocation system, which is composed of SRP and FtsY. SRP is a ribonucleoprotein composed of Ffh and a 4.5S RNA molecule.

It is found in the cell inner membrane. The protein localises to the cytoplasm. The enzyme catalyses GTP + H2O = GDP + phosphate + H(+). Functionally, involved in targeting and insertion of nascent membrane proteins into the cytoplasmic membrane. Acts as a receptor for the complex formed by the signal recognition particle (SRP) and the ribosome-nascent chain (RNC). Interaction with SRP-RNC leads to the transfer of the RNC complex to the Sec translocase for insertion into the membrane, the hydrolysis of GTP by both Ffh and FtsY, and the dissociation of the SRP-FtsY complex into the individual components. The protein is Signal recognition particle receptor FtsY of Helicobacter pylori (strain J99 / ATCC 700824) (Campylobacter pylori J99).